The following is a 217-amino-acid chain: MOB kinase activator-like 2 (217 aa).

The tract at residues 15-38 is disordered; it reads GKESIRGNYKPKKHPRGSSRHTMR. Residues 23–38 are compositionally biased toward basic residues; it reads YKPKKHPRGSSRHTMR. Zn(2+) contacts are provided by cysteine 89, cysteine 94, histidine 167, and histidine 172.

The protein belongs to the MOB1/phocein family.

This Dictyostelium discoideum (Social amoeba) protein is MOB kinase activator-like 2 (mob2).